We begin with the raw amino-acid sequence, 468 residues long: MATRGSGPRAPRLLLLVQLVAGRCGLAGAAGGAQRGLSEPSSIAKHEDSLLKDLFQDYERWVRPVEHLNDKIKIKFGLAISQLVDVDEKNQLMTTNVWLKQEWIDVKLRWNPDDYGGIKVIRVPSDSVWTPDIVLFDNADGRFEGTSTKTVIRYNGTVTWTPPANYKSSCTIDVTFFPFDLQNCSMKFGSWTYDGSQVDIILEDQDVDKRDFFDNGEWEIVSATGSKGNRTDSCCWYPYVTYSFVIKRLPLFYTLFLIIPCIGLSFLTVLVFYLPSNEGEKICLCTSVLVSLTVFLLVIEEIIPSSSKVIPLIGEYLVFTMIFVTLSIMVTVFAINIHHRSSSTHNAMAPWVRKIFLHTLPKLLCMRSHVDRYFTQKEETESGSGPKSSRNTLEAALDSVRCITRHIMKENDVREVVEDWKFIAQVLDRMFLWTFLFVSIVGSLGLFVPVIYKWANILIPVHIGNANK.

Positions 1 to 22 are cleaved as a signal peptide; that stretch reads MATRGSGPRAPRLLLLVQLVAG. Over 23–254 the chain is Extracellular; sequence RCGLAGAAGG…VIKRLPLFYT (232 aa). Asn-155, Asn-183, and Asn-229 each carry an N-linked (GlcNAc...) asparagine glycan. A disulfide bond links Cys-170 and Cys-184. The cysteines at positions 234 and 235 are disulfide-linked. Transmembrane regions (helical) follow at residues 255-275, 282-302, and 317-337; these read LFLI…FYLP, ICLC…IEEI, and LVFT…AINI. Over 338-429 the chain is Cytoplasmic; the sequence is HHRSSSTHNA…WKFIAQVLDR (92 aa). The chain crosses the membrane as a helical span at residues 430–451; the sequence is MFLWTFLFVSIVGSLGLFVPVI. Residues 452–468 are Extracellular-facing; that stretch reads YKWANILIPVHIGNANK.

The protein belongs to the ligand-gated ion channel (TC 1.A.9) family. Acetylcholine receptor (TC 1.A.9.1) subfamily. Alpha-5/CHRNA5 sub-subfamily. As to quaternary structure, neuronal AChR that forms heteropentamers composed of two different type of subunits: alpha and non-alpha (beta). CHRNA5/alpha-5 subunit is only able to form functional nAChRs when co-assembled with another alpha subunit, can be combined to CHRNA4/alpha-4 or CHRNA3/alpha-3 and CHRNB4/beta-4 or CHRNB2/beta-2 to give rise to functional receptors. Interacts with LYPD6.

It localises to the synaptic cell membrane. The protein localises to the cell membrane. It catalyses the reaction Ca(2+)(in) = Ca(2+)(out). The catalysed reaction is K(+)(in) = K(+)(out). It carries out the reaction Na(+)(in) = Na(+)(out). With respect to regulation, activated by a myriad of ligands such as acetylcholine, cytisine, nicotine, choline and epibatidine. In terms of biological role, component of neuronal acetylcholine receptors (nAChRs) that function as pentameric, ligand-gated cation channels with high calcium permeability among other activities. nAChRs are excitatory neurotrasnmitter receptors formed by a collection of nAChR subunits known to mediate synaptic transmission in the nervous system and the neuromuscular junction. Each nAchR subunit confers differential attributes to channel properties, including activation, deactivation and desensitization kinetics, pH sensitivity, cation permeability, and binding to allosteric modulators. Has an accessory rather than functional role and is only able to form functional nAChRs when co-assembled with another beta subunit. Participates in pentameric assemblies along with CHRNA3, CHRNA4, CHRNB2 and CHRNB4. Increases receptor sensitivity to acetylcholine and nicotine when associated with CHRNA4 and CHRNB2. Plays a role in nicotine addiction. This Pan troglodytes (Chimpanzee) protein is Neuronal acetylcholine receptor subunit alpha-5 (CHRNA5).